A 447-amino-acid polypeptide reads, in one-letter code: Phosphoglucosamine mutase (447 aa).

The active-site Phosphoserine intermediate is the S101. S101, D242, D244, and D246 together coordinate Mg(2+). Phosphoserine is present on S101.

Belongs to the phosphohexose mutase family. The cofactor is Mg(2+). Post-translationally, activated by phosphorylation.

It catalyses the reaction alpha-D-glucosamine 1-phosphate = D-glucosamine 6-phosphate. Catalyzes the conversion of glucosamine-6-phosphate to glucosamine-1-phosphate. The protein is Phosphoglucosamine mutase of Methylobacterium radiotolerans (strain ATCC 27329 / DSM 1819 / JCM 2831 / NBRC 15690 / NCIMB 10815 / 0-1).